Here is a 374-residue protein sequence, read N- to C-terminus: uncharacterized protein (374 aa).

29–36 (GSLNSGKS) contacts ATP.

Belongs to the archaeal ATPase family.

This is an uncharacterized protein from Methanocaldococcus jannaschii (strain ATCC 43067 / DSM 2661 / JAL-1 / JCM 10045 / NBRC 100440) (Methanococcus jannaschii).